The following is a 227-amino-acid chain: Cytochrome c oxidase subunit 2 (227 aa).

The Mitochondrial intermembrane segment spans residues methionine 1–serine 14. The chain crosses the membrane as a helical span at residues proline 15–threonine 45. Topologically, residues leucine 46–glutamine 59 are mitochondrial matrix. The helical transmembrane segment at glutamate 60–threonine 87 threads the bilayer. Topologically, residues aspartate 88–leucine 227 are mitochondrial intermembrane. Histidine 161, cysteine 196, glutamate 198, cysteine 200, histidine 204, and methionine 207 together coordinate Cu cation. Glutamate 198 serves as a coordination point for Mg(2+).

This sequence belongs to the cytochrome c oxidase subunit 2 family. In terms of assembly, component of the cytochrome c oxidase (complex IV, CIV), a multisubunit enzyme composed of 14 subunits. The complex is composed of a catalytic core of 3 subunits MT-CO1, MT-CO2 and MT-CO3, encoded in the mitochondrial DNA, and 11 supernumerary subunits COX4I, COX5A, COX5B, COX6A, COX6B, COX6C, COX7A, COX7B, COX7C, COX8 and NDUFA4, which are encoded in the nuclear genome. The complex exists as a monomer or a dimer and forms supercomplexes (SCs) in the inner mitochondrial membrane with NADH-ubiquinone oxidoreductase (complex I, CI) and ubiquinol-cytochrome c oxidoreductase (cytochrome b-c1 complex, complex III, CIII), resulting in different assemblies (supercomplex SCI(1)III(2)IV(1) and megacomplex MCI(2)III(2)IV(2)). Found in a complex with TMEM177, COA6, COX18, COX20, SCO1 and SCO2. Interacts with TMEM177 in a COX20-dependent manner. Interacts with COX20. Interacts with COX16. It depends on Cu cation as a cofactor.

The protein localises to the mitochondrion inner membrane. The catalysed reaction is 4 Fe(II)-[cytochrome c] + O2 + 8 H(+)(in) = 4 Fe(III)-[cytochrome c] + 2 H2O + 4 H(+)(out). Functionally, component of the cytochrome c oxidase, the last enzyme in the mitochondrial electron transport chain which drives oxidative phosphorylation. The respiratory chain contains 3 multisubunit complexes succinate dehydrogenase (complex II, CII), ubiquinol-cytochrome c oxidoreductase (cytochrome b-c1 complex, complex III, CIII) and cytochrome c oxidase (complex IV, CIV), that cooperate to transfer electrons derived from NADH and succinate to molecular oxygen, creating an electrochemical gradient over the inner membrane that drives transmembrane transport and the ATP synthase. Cytochrome c oxidase is the component of the respiratory chain that catalyzes the reduction of oxygen to water. Electrons originating from reduced cytochrome c in the intermembrane space (IMS) are transferred via the dinuclear copper A center (CU(A)) of subunit 2 and heme A of subunit 1 to the active site in subunit 1, a binuclear center (BNC) formed by heme A3 and copper B (CU(B)). The BNC reduces molecular oxygen to 2 water molecules using 4 electrons from cytochrome c in the IMS and 4 protons from the mitochondrial matrix. This is Cytochrome c oxidase subunit 2 (MT-CO2) from Hylobates lar (Lar gibbon).